We begin with the raw amino-acid sequence, 201 residues long: Histidinol dehydrogenase (201 aa).

It belongs to the histidinol dehydrogenase family. In terms of assembly, homodimer. The cofactor is Zn(2+).

The enzyme catalyses L-histidinol + 2 NAD(+) + H2O = L-histidine + 2 NADH + 3 H(+). It participates in amino-acid biosynthesis; L-histidine biosynthesis; L-histidine from 5-phospho-alpha-D-ribose 1-diphosphate: step 9/9. Catalyzes the sequential NAD-dependent oxidations of L-histidinol to L-histidinaldehyde and then to L-histidine. This Buchnera aphidicola subsp. Melaphis rhois protein is Histidinol dehydrogenase (hisD).